Reading from the N-terminus, the 94-residue chain is Neutrophil antibiotic peptide NP-1 (94 aa).

The first 19 residues, 1 to 19 (MRTLTLLTALLLLALHTQA), serve as a signal peptide directing secretion. A propeptide spanning residues 20–62 (KSPQGTAEEAPDQEQLVMEDQDISISFGGDKGTALQDADVKAG) is cleaved from the precursor. Cystine bridges form between cysteine 65-cysteine 93, cysteine 67-cysteine 82, and cysteine 72-cysteine 92. Tyrosine 84 is subject to Phosphotyrosine.

The protein belongs to the alpha-defensin family. As to expression, highest expression in bone marrow and to a much lesser extent in small intestine.

The protein resides in the secreted. Functionally, active in vitro against S.aureus, fungi, Gram-positive and Gram-negative bacteria and to a lesser extent against an enveloped virus. The polypeptide is Neutrophil antibiotic peptide NP-1 (Rattus norvegicus (Rat)).